The sequence spans 339 residues: 4-hydroxy-2-oxovalerate aldolase 3 (339 aa).

The region spanning Ile7–Ala259 is the Pyruvate carboxyltransferase domain. Arg15–Asp16 is a binding site for substrate. Asp16 serves as a coordination point for Mn(2+). The active-site Proton acceptor is His19. Substrate contacts are provided by Ser169 and His198. Mn(2+) contacts are provided by His198 and His200. Tyr289 is a binding site for substrate.

Belongs to the 4-hydroxy-2-oxovalerate aldolase family.

The enzyme catalyses (S)-4-hydroxy-2-oxopentanoate = acetaldehyde + pyruvate. The sequence is that of 4-hydroxy-2-oxovalerate aldolase 3 from Rhodococcus opacus (strain B4).